The following is a 244-amino-acid chain: MNFSVIIPARYASSRLPAKLLRDVHGKPLIQLTYENAVNSGANRVIIATDDKRIEVVANDFGAITCMTDGHFTSGTLRIAQVLEKLDINDDEIIVNVQGDEPMLDPSVIDQVVNNLATNPMQIATLCKQITDKAQYFDPNCVKVVFNKIGKALYFSRATIPFFREARDFDLKLCYKHIGVYAYRAGVIKQYLTMNSSSYEKVEKLEQLTALNEGFDIHVAPACASVGHGVDIQRDLDEVRKELG.

It belongs to the KdsB family.

The protein resides in the cytoplasm. The enzyme catalyses 3-deoxy-alpha-D-manno-oct-2-ulosonate + CTP = CMP-3-deoxy-beta-D-manno-octulosonate + diphosphate. It functions in the pathway nucleotide-sugar biosynthesis; CMP-3-deoxy-D-manno-octulosonate biosynthesis; CMP-3-deoxy-D-manno-octulosonate from 3-deoxy-D-manno-octulosonate and CTP: step 1/1. The protein operates within bacterial outer membrane biogenesis; lipopolysaccharide biosynthesis. Activates KDO (a required 8-carbon sugar) for incorporation into bacterial lipopolysaccharide in Gram-negative bacteria. This is 3-deoxy-manno-octulosonate cytidylyltransferase from Vesicomyosocius okutanii subsp. Calyptogena okutanii (strain HA).